A 135-amino-acid polypeptide reads, in one-letter code: D-ribose pyranase (135 aa).

The active-site Proton donor is His-20. Residues Asp-28, His-102, and 124–126 (YSN) contribute to the substrate site.

This sequence belongs to the RbsD / FucU family. RbsD subfamily. Homodecamer.

It is found in the cytoplasm. The enzyme catalyses beta-D-ribopyranose = beta-D-ribofuranose. Its pathway is carbohydrate metabolism; D-ribose degradation; D-ribose 5-phosphate from beta-D-ribopyranose: step 1/2. Its function is as follows. Catalyzes the interconversion of beta-pyran and beta-furan forms of D-ribose. This chain is D-ribose pyranase, found in Thermotoga maritima (strain ATCC 43589 / DSM 3109 / JCM 10099 / NBRC 100826 / MSB8).